We begin with the raw amino-acid sequence, 334 residues long: Glycerol-3-phosphate dehydrogenase [NAD(P)+] (334 aa).

NADPH-binding residues include serine 10, tryptophan 11, histidine 31, arginine 32, and lysine 105. Lysine 105, glycine 136, and serine 138 together coordinate sn-glycerol 3-phosphate. Alanine 140 is an NADPH binding site. Sn-glycerol 3-phosphate-binding residues include lysine 191, aspartate 244, serine 254, arginine 255, and asparagine 256. Lysine 191 functions as the Proton acceptor in the catalytic mechanism. Arginine 255 provides a ligand contact to NADPH. Residues valine 279 and glutamate 281 each contribute to the NADPH site.

The protein belongs to the NAD-dependent glycerol-3-phosphate dehydrogenase family.

It localises to the cytoplasm. It carries out the reaction sn-glycerol 3-phosphate + NAD(+) = dihydroxyacetone phosphate + NADH + H(+). The enzyme catalyses sn-glycerol 3-phosphate + NADP(+) = dihydroxyacetone phosphate + NADPH + H(+). Its pathway is membrane lipid metabolism; glycerophospholipid metabolism. In terms of biological role, catalyzes the reduction of the glycolytic intermediate dihydroxyacetone phosphate (DHAP) to sn-glycerol 3-phosphate (G3P), the key precursor for phospholipid synthesis. This is Glycerol-3-phosphate dehydrogenase [NAD(P)+] from Chlorobium phaeobacteroides (strain BS1).